The chain runs to 194 residues: Large ribosomal subunit protein eL15 (194 aa).

The interval 164–194 (SAGKKGRGLRNKGKGAEKVRPSVRANKGKTK) is disordered. Basic residues predominate over residues 167 to 176 (KKGRGLRNKG).

Belongs to the eukaryotic ribosomal protein eL15 family.

The polypeptide is Large ribosomal subunit protein eL15 (Thermococcus gammatolerans (strain DSM 15229 / JCM 11827 / EJ3)).